A 146-amino-acid polypeptide reads, in one-letter code: MEMDKRMKSLAMTAFFGELNTLDIMALIMSIFKRHPNNTIFSVDKDGQFMIDFEYDNYKASQYLDLTLTPISGDECKTHASSIAEQLACVDIIKEDISEYIKTTPRLKRFIKKYRNRSDTRISRDTEKLKIALAKGIDYEYIKDAC.

A helical transmembrane segment spans residues Leu10–Phe32.

It belongs to the orthopoxvirus OPG112 family.

It localises to the host membrane. The protein localises to the host cytoplasm. Its function is as follows. Contributes to the formation of crescents and immature virions (IV). Interacts with phosphatidylinositol-3-phosphate (PI3P) and phosphatidylinositol-4-phosphate (PI4P) lipids in order to form virion membranes. Mechanistically, mediates proper formation of OPG125-hexamers, and hence the honey comb lattice and spherical immature virus. This is Late protein OPG112 (OPG112) from Vaccinia virus (strain Ankara) (VACV).